We begin with the raw amino-acid sequence, 140 residues long: Large ribosomal subunit protein uL11 (140 aa).

It belongs to the universal ribosomal protein uL11 family. As to quaternary structure, part of the ribosomal stalk of the 50S ribosomal subunit. Interacts with L10 and the large rRNA to form the base of the stalk. L10 forms an elongated spine to which L12 dimers bind in a sequential fashion forming a multimeric L10(L12)X complex. In terms of processing, one or more lysine residues are methylated.

Its function is as follows. Forms part of the ribosomal stalk which helps the ribosome interact with GTP-bound translation factors. The polypeptide is Large ribosomal subunit protein uL11 (Pelobacter propionicus (strain DSM 2379 / NBRC 103807 / OttBd1)).